The primary structure comprises 216 residues: MAAGSWTAGLLAFALLCLPWPQEASAFPAMPLSSLFANAVLRAQHLHQLAADTYKEFERAYIPEGQRYSIQNAQAAFCFSETIPAPTGKDEAQQRSDMELLRFSLLLIQSWLGPVQFLSRAFTNTLVFGTSDRVYEKLKDLEEGIQALMRELEDGSPRVGQLLKQTYDKFDTNLRGDDALLKNYGLLSCFKKDLHKAETYLRVMKCRRFVESSCVF.

The signal sequence occupies residues Met-1–Ala-26. Zn(2+) is bound at residue His-45. A disulfide bond links Cys-78 and Cys-189. Ser-131 is subject to Phosphoserine. Zn(2+) is bound at residue Glu-198. Cys-206 and Cys-214 are disulfide-bonded.

Belongs to the somatotropin/prolactin family.

It is found in the secreted. Plays an important role in growth control. Its major role in stimulating body growth is to stimulate the liver and other tissues to secrete IGF1. It stimulates both the differentiation and proliferation of myoblasts. It also stimulates amino acid uptake and protein synthesis in muscle and other tissues. In Oryctolagus cuniculus (Rabbit), this protein is Somatotropin (GH1).